The following is a 179-amino-acid chain: Large ribosomal subunit protein uL5 (179 aa).

Belongs to the universal ribosomal protein uL5 family. Part of the 50S ribosomal subunit; part of the 5S rRNA/L5/L18/L25 subcomplex. Contacts the 5S rRNA and the P site tRNA. Forms a bridge to the 30S subunit in the 70S ribosome.

Functionally, this is one of the proteins that bind and probably mediate the attachment of the 5S RNA into the large ribosomal subunit, where it forms part of the central protuberance. In the 70S ribosome it contacts protein S13 of the 30S subunit (bridge B1b), connecting the 2 subunits; this bridge is implicated in subunit movement. Contacts the P site tRNA; the 5S rRNA and some of its associated proteins might help stabilize positioning of ribosome-bound tRNAs. The sequence is that of Large ribosomal subunit protein uL5 from Buchnera aphidicola subsp. Schizaphis graminum (strain Sg).